We begin with the raw amino-acid sequence, 152 residues long: Arginine repressor (152 aa).

This sequence belongs to the ArgR family.

The protein localises to the cytoplasm. It participates in amino-acid biosynthesis; L-arginine biosynthesis [regulation]. Functionally, regulates arginine biosynthesis genes. This is Arginine repressor from Lactococcus lactis subsp. cremoris (strain MG1363).